The primary structure comprises 499 residues: Acetylcholine receptor subunit alpha-type acr-16 (499 aa).

A signal peptide spans 1 to 19 (MSSVCALLLSCALFLVAHG). At 20–232 (SLQERRLYED…LHMRRRTLYY (213 aa)) the chain is on the extracellular side. 2 N-linked (GlcNAc...) asparagine glycosylation sites follow: asparagine 43 and asparagine 93. Cystine bridges form between cysteine 147-cysteine 161 and cysteine 211-cysteine 212. 3 consecutive transmembrane segments (helical) span residues 233-253 (GFNL…GFTL), 261-281 (ITLQ…VSEM), and 289-309 (VPLL…STVF). Topologically, residues 310–473 (TVYVLNLHYR…WKFAAMVVDR (164 aa)) are cytoplasmic. Residues 474–494 (LCLYVFTIFIIASTIGIFWSA) form a helical membrane-spanning segment. At 495–499 (PYLVA) the chain is on the extracellular side.

This sequence belongs to the ligand-gated ion channel (TC 1.A.9) family. Acetylcholine receptor (TC 1.A.9.1) subfamily.

It is found in the postsynaptic cell membrane. The protein resides in the cell membrane. Its function is as follows. After binding acetylcholine, the AChR responds by an extensive change in conformation that affects all subunits and leads to opening of an ion-conducting channel across the plasma membrane. A subunit of the levamisole-insensitive nicotinic receptor. This is Acetylcholine receptor subunit alpha-type acr-16 from Caenorhabditis briggsae.